The following is a 298-amino-acid chain: Lipoyl synthase (298 aa).

[4Fe-4S] cluster is bound by residues Cys-40, Cys-45, Cys-51, Cys-67, Cys-71, Cys-74, and Ser-280. Positions 53-269 (AVRKTATFMI…KEIALSKGFS (217 aa)) constitute a Radical SAM core domain.

It belongs to the radical SAM superfamily. Lipoyl synthase family. Requires [4Fe-4S] cluster as cofactor.

The protein resides in the cytoplasm. It catalyses the reaction [[Fe-S] cluster scaffold protein carrying a second [4Fe-4S](2+) cluster] + N(6)-octanoyl-L-lysyl-[protein] + 2 oxidized [2Fe-2S]-[ferredoxin] + 2 S-adenosyl-L-methionine + 4 H(+) = [[Fe-S] cluster scaffold protein] + N(6)-[(R)-dihydrolipoyl]-L-lysyl-[protein] + 4 Fe(3+) + 2 hydrogen sulfide + 2 5'-deoxyadenosine + 2 L-methionine + 2 reduced [2Fe-2S]-[ferredoxin]. It functions in the pathway protein modification; protein lipoylation via endogenous pathway; protein N(6)-(lipoyl)lysine from octanoyl-[acyl-carrier-protein]. Its function is as follows. Catalyzes the radical-mediated insertion of two sulfur atoms into the C-6 and C-8 positions of the octanoyl moiety bound to the lipoyl domains of lipoate-dependent enzymes, thereby converting the octanoylated domains into lipoylated derivatives. This Bacillus cereus (strain B4264) protein is Lipoyl synthase.